Here is a 463-residue protein sequence, read N- to C-terminus: Exodeoxyribonuclease 7 large subunit (463 aa).

It belongs to the XseA family. As to quaternary structure, heterooligomer composed of large and small subunits.

Its subcellular location is the cytoplasm. It carries out the reaction Exonucleolytic cleavage in either 5'- to 3'- or 3'- to 5'-direction to yield nucleoside 5'-phosphates.. Bidirectionally degrades single-stranded DNA into large acid-insoluble oligonucleotides, which are then degraded further into small acid-soluble oligonucleotides. This is Exodeoxyribonuclease 7 large subunit from Bordetella bronchiseptica (strain ATCC BAA-588 / NCTC 13252 / RB50) (Alcaligenes bronchisepticus).